Consider the following 333-residue polypeptide: Tetraacyldisaccharide 4'-kinase (333 aa).

Residue 55–62 (TIGGNGKT) coordinates ATP.

The protein belongs to the LpxK family.

It catalyses the reaction a lipid A disaccharide + ATP = a lipid IVA + ADP + H(+). The protein operates within glycolipid biosynthesis; lipid IV(A) biosynthesis; lipid IV(A) from (3R)-3-hydroxytetradecanoyl-[acyl-carrier-protein] and UDP-N-acetyl-alpha-D-glucosamine: step 6/6. In terms of biological role, transfers the gamma-phosphate of ATP to the 4'-position of a tetraacyldisaccharide 1-phosphate intermediate (termed DS-1-P) to form tetraacyldisaccharide 1,4'-bis-phosphate (lipid IVA). The chain is Tetraacyldisaccharide 4'-kinase from Blochmanniella floridana.